We begin with the raw amino-acid sequence, 850 residues long: Protein STB2 (850 aa).

2 positions are modified to phosphoserine: serine 594 and serine 625.

The protein to yeast STB6. Interacts with SIN3.

The chain is Protein STB2 (STB2) from Saccharomyces cerevisiae (strain ATCC 204508 / S288c) (Baker's yeast).